The primary structure comprises 121 residues: Basic phospholipase A2 (121 aa).

7 disulfide bridges follow: Cys26–Cys114, Cys28–Cys44, Cys43–Cys94, Cys49–Cys121, Cys50–Cys87, Cys57–Cys80, and Cys74–Cys85. Ca(2+)-binding residues include Tyr27, Gly29, and Gly31. His47 is an active-site residue. Residue Asp48 coordinates Ca(2+). The active site involves Asp88.

In terms of assembly, homopentamer. Ca(2+) is required as a cofactor. Expressed by the venom gland.

The protein resides in the secreted. The catalysed reaction is a 1,2-diacyl-sn-glycero-3-phosphocholine + H2O = a 1-acyl-sn-glycero-3-phosphocholine + a fatty acid + H(+). Functionally, snake venom phospholipase A2 (PLA2) that displays moderate myotoxic activity in vivo, and cytotoxic activity in vitro. In vitro, shows anticoagulant activity on human plasma and in mice causes inflammatory cell infiltration and myonecrosis in the gastrocnemius muscles of CD-1 mice 3 hours after injection (100 ug). PLA2 catalyzes the calcium-dependent hydrolysis of the 2-acyl groups in 3-sn-phosphoglycerides. In Porthidium ophryomegas (Slender hognose viper), this protein is Basic phospholipase A2.